The primary structure comprises 157 residues: DNA gyrase inhibitor (157 aa).

Belongs to the DNA gyrase inhibitor family. As to quaternary structure, interacts with DNA gyrase.

Its subcellular location is the cytoplasm. Functionally, inhibits the supercoiling activity of DNA gyrase. Acts by inhibiting DNA gyrase at an early step, prior to (or at the step of) binding of DNA by the gyrase. It protects cells against toxins that target DNA gyrase, by inhibiting activity of these toxins and reducing the formation of lethal double-strand breaks in the cell. The protein is DNA gyrase inhibitor of Yersinia enterocolitica serotype O:8 / biotype 1B (strain NCTC 13174 / 8081).